The primary structure comprises 159 residues: Ribosomal RNA large subunit methyltransferase H (159 aa).

S-adenosyl-L-methionine contacts are provided by residues Leu-76, Gly-108, and 127–132 (FGRLTL).

The protein belongs to the RNA methyltransferase RlmH family. In terms of assembly, homodimer.

It is found in the cytoplasm. It carries out the reaction pseudouridine(1915) in 23S rRNA + S-adenosyl-L-methionine = N(3)-methylpseudouridine(1915) in 23S rRNA + S-adenosyl-L-homocysteine + H(+). Functionally, specifically methylates the pseudouridine at position 1915 (m3Psi1915) in 23S rRNA. In Listeria monocytogenes serovar 1/2a (strain ATCC BAA-679 / EGD-e), this protein is Ribosomal RNA large subunit methyltransferase H.